Reading from the N-terminus, the 242-residue chain is LexA repressor (242 aa).

Positions 26-46 form a DNA-binding region, H-T-H motif; sequence FEEMKAALNLKSKSGIHRLIS. Catalysis depends on for autocatalytic cleavage activity residues Ser-163 and Lys-201.

It belongs to the peptidase S24 family. As to quaternary structure, homodimer.

It catalyses the reaction Hydrolysis of Ala-|-Gly bond in repressor LexA.. In terms of biological role, represses a number of genes involved in the response to DNA damage (SOS response), including recA and lexA. In the presence of single-stranded DNA, RecA interacts with LexA causing an autocatalytic cleavage which disrupts the DNA-binding part of LexA, leading to derepression of the SOS regulon and eventually DNA repair. In Granulibacter bethesdensis (strain ATCC BAA-1260 / CGDNIH1), this protein is LexA repressor.